Reading from the N-terminus, the 145-residue chain is Transcription factor MEE8 (145 aa).

Residues 33-49 (EKGVEKVGQKRSAESRR) show a composition bias toward basic and acidic residues. The tract at residues 33–61 (EKGVEKVGQKRSAESRREGKKKRVKTQCV) is disordered. A bHLH domain is found at 66–115 (DKSDHDTLLKKKRRERIRRQLETLKEITPNCPQSDINAILDCVIEYTNNL).

As to quaternary structure, homodimer.

The protein resides in the nucleus. In terms of biological role, required during early embryo development, for the endosperm formation. This is Transcription factor MEE8 (MEE8) from Arabidopsis thaliana (Mouse-ear cress).